Consider the following 55-residue polypeptide: ATP synthase F(0) complex subunit 8 (55 aa).

The helical transmembrane segment at 10 to 32 (FFIMLASWLTFSLIIQPKLLTFV) threads the bilayer.

Belongs to the ATPase protein 8 family. As to quaternary structure, component of the ATP synthase complex composed at least of ATP5F1A/subunit alpha, ATP5F1B/subunit beta, ATP5MC1/subunit c (homooctomer), MT-ATP6/subunit a, MT-ATP8/subunit 8, ATP5ME/subunit e, ATP5MF/subunit f, ATP5MG/subunit g, ATP5MK/subunit k, ATP5MJ/subunit j, ATP5F1C/subunit gamma, ATP5F1D/subunit delta, ATP5F1E/subunit epsilon, ATP5PF/subunit F6, ATP5PB/subunit b, ATP5PD/subunit d, ATP5PO/subunit OSCP. ATP synthase complex consists of a soluble F(1) head domain (subunits alpha(3) and beta(3)) - the catalytic core - and a membrane F(0) domain - the membrane proton channel (subunits c, a, 8, e, f, g, k and j). These two domains are linked by a central stalk (subunits gamma, delta, and epsilon) rotating inside the F1 region and a stationary peripheral stalk (subunits F6, b, d, and OSCP).

It is found in the mitochondrion membrane. Its function is as follows. Subunit 8, of the mitochondrial membrane ATP synthase complex (F(1)F(0) ATP synthase or Complex V) that produces ATP from ADP in the presence of a proton gradient across the membrane which is generated by electron transport complexes of the respiratory chain. ATP synthase complex consist of a soluble F(1) head domain - the catalytic core - and a membrane F(1) domain - the membrane proton channel. These two domains are linked by a central stalk rotating inside the F(1) region and a stationary peripheral stalk. During catalysis, ATP synthesis in the catalytic domain of F(1) is coupled via a rotary mechanism of the central stalk subunits to proton translocation. In vivo, can only synthesize ATP although its ATP hydrolase activity can be activated artificially in vitro. Part of the complex F(0) domain. This chain is ATP synthase F(0) complex subunit 8, found in Loxigilla noctis (Lesser Antillean bullfinch).